An 83-amino-acid chain; its full sequence is Cytochrome b559 subunit alpha (83 aa).

Residues 21–35 (VIHSITIPSLFIAGW) form a helical membrane-spanning segment. Residue H23 coordinates heme.

The protein belongs to the PsbE/PsbF family. In terms of assembly, heterodimer of an alpha subunit and a beta subunit. PSII is composed of 1 copy each of membrane proteins PsbA, PsbB, PsbC, PsbD, PsbE, PsbF, PsbH, PsbI, PsbJ, PsbK, PsbL, PsbM, PsbT, PsbX, PsbY, PsbZ, Psb30/Ycf12, at least 3 peripheral proteins of the oxygen-evolving complex and a large number of cofactors. It forms dimeric complexes. It depends on heme b as a cofactor.

It localises to the plastid. Its subcellular location is the chloroplast thylakoid membrane. Its function is as follows. This b-type cytochrome is tightly associated with the reaction center of photosystem II (PSII). PSII is a light-driven water:plastoquinone oxidoreductase that uses light energy to abstract electrons from H(2)O, generating O(2) and a proton gradient subsequently used for ATP formation. It consists of a core antenna complex that captures photons, and an electron transfer chain that converts photonic excitation into a charge separation. The protein is Cytochrome b559 subunit alpha of Tupiella akineta (Green alga).